A 439-amino-acid polypeptide reads, in one-letter code: Trigger factor (439 aa).

Residues 170 to 255 form the PPIase FKBP-type domain; it reads GDTVVIDFDG…IHELKKLETP (86 aa).

The protein belongs to the FKBP-type PPIase family. Tig subfamily.

It localises to the cytoplasm. The catalysed reaction is [protein]-peptidylproline (omega=180) = [protein]-peptidylproline (omega=0). Its function is as follows. Involved in protein export. Acts as a chaperone by maintaining the newly synthesized protein in an open conformation. Functions as a peptidyl-prolyl cis-trans isomerase. This chain is Trigger factor, found in Oenococcus oeni (strain ATCC BAA-331 / PSU-1).